The chain runs to 496 residues: Omega-crystallin (496 aa).

Belongs to the aldehyde dehydrogenase family. As to expression, lens.

In terms of biological role, omega-crystallins are structural components of squids and octopi eye lens. Contains relatively little if any DHAL activity. In Enteroctopus dofleini (North Pacific giant octopus), this protein is Omega-crystallin.